The following is a 236-amino-acid chain: EF-hand domain-containing protein D1 (236 aa).

Positions Met-1–Ala-48 are disordered. Pro residues predominate over residues Gly-28–Trp-42. 2 consecutive EF-hand domains span residues Arg-87–Pro-122 and Gln-123–Gly-158. Ca(2+) is bound by residues Asp-100, Asp-104, Glu-111, Asp-136, Asp-138, Asp-140, Lys-142, and Glu-147.

The protein localises to the mitochondrion inner membrane. Functionally, acts as a calcium sensor for mitochondrial flash (mitoflash) activation, an event characterized by stochastic bursts of superoxide production. May play a role in neuronal differentiation. In Bos taurus (Bovine), this protein is EF-hand domain-containing protein D1 (EFHD1).